Consider the following 172-residue polypeptide: L-2,4-diaminobutyric acid acetyltransferase (172 aa).

The N-acetyltransferase domain maps to 11 to 165; it reads ITLSQPTAEV…HETEMLVKVG (155 aa).

Belongs to the acetyltransferase family. EctA subfamily. Homodimer.

The catalysed reaction is L-2,4-diaminobutanoate + acetyl-CoA = (2S)-4-acetamido-2-aminobutanoate + CoA + H(+). Its pathway is amine and polyamine biosynthesis; ectoine biosynthesis; L-ectoine from L-aspartate 4-semialdehyde: step 2/3. With respect to regulation, inhibited by zinc and cadmium. Its function is as follows. Catalyzes the acetylation of L-2,4-diaminobutyrate (DABA) to gamma-N-acetyl-alpha,gamma-diaminobutyric acid (ADABA) with acetyl coenzyme A. In Methylotuvimicrobium alcaliphilum (strain DSM 19304 / NCIMB 14124 / VKM B-2133 / 20Z) (Methylomicrobium alcaliphilum), this protein is L-2,4-diaminobutyric acid acetyltransferase (ectA).